The chain runs to 329 residues: Synaptonemal complex central element protein 1 (329 aa).

The disordered stretch occupies residues 1–33; the sequence is MATRPQPLSVEPEGSADLLHGPEGARGRRGSTQ. Coiled coils occupy residues 28–168 and 194–294; these read RRGS…ETLM and KEQL…ILAQ. Residues 295–329 are disordered; the sequence is IQSTQKEEDSSWRTASPKPLEAHKETVQERPSSRT. Over residues 314-329 the composition is skewed to basic and acidic residues; sequence LEAHKETVQERPSSRT.

Belongs to the SYCE family. As to quaternary structure, homodimer. Found in a complex with SYCP1 and SYCE2. Interacts with SYCP1, SYCE2 and SYCE3. Interacts with SIX6OS1.

The protein resides in the nucleus. It localises to the chromosome. Functionally, major component of the transverse central element of synaptonemal complexes (SCS), formed between homologous chromosomes during meiotic prophase. Requires SYCP1 in order to be incorporated into the central element. May have a role in the synaptonemal complex assembly, stabilization and recombination. This Rattus norvegicus (Rat) protein is Synaptonemal complex central element protein 1 (Syce1).